The primary structure comprises 405 residues: Transposase from transposon Tn916 (405 aa).

Residues 79-163 enclose the Core-binding (CB) domain; it reads GKKMTLCQLY…SLKASFYIAI (85 aa). The region spanning 186–392 is the Tyr recombinase domain; it reads VPKTVLTEEQ…TFDSAMAEMK (207 aa). Catalysis depends on residues arginine 225, lysine 264, histidine 343, arginine 346, and histidine 369. Catalysis depends on tyrosine 379, which acts as the O-(3'-phospho-DNA)-tyrosine intermediate.

It belongs to the 'phage' integrase family.

In Enterococcus faecalis (Streptococcus faecalis), this protein is Transposase from transposon Tn916 (Int-Tn).